The primary structure comprises 266 residues: Chymotrypsin-like elastase family member 1 (266 aa).

Positions 1–16 (MLRFLVFATLVLYGHS) are cleaved as a signal peptide. Residues 17–26 (TQDFPETNAR) constitute a propeptide, activation peptide. The Peptidase S1 domain maps to 27–264 (VVGGTEAGRN…YISWINKTIA (238 aa)). A disulfide bridge connects residues cysteine 56 and cysteine 72. Catalysis depends on histidine 71, which acts as the Charge relay system. Aspartate 85, asparagine 87, glutamine 90, and glutamate 95 together coordinate Ca(2+). Asparagine 87 carries an N-linked (GlcNAc...) asparagine glycan. Aspartate 119 acts as the Charge relay system in catalysis. 3 disulfide bridges follow: cysteine 153-cysteine 220, cysteine 184-cysteine 200, and cysteine 210-cysteine 240. Residue serine 214 is the Charge relay system of the active site. 2 N-linked (GlcNAc...) asparagine glycosylation sites follow: asparagine 241 and asparagine 260.

This sequence belongs to the peptidase S1 family. Elastase subfamily. It depends on Ca(2+) as a cofactor.

It localises to the secreted. It catalyses the reaction Hydrolysis of proteins, including elastin. Preferential cleavage: Ala-|-Xaa.. Functionally, serine proteases that hydrolyze many proteins in addition to elastin. The protein is Chymotrypsin-like elastase family member 1 (CELA1) of Macaca fascicularis (Crab-eating macaque).